Reading from the N-terminus, the 321-residue chain is MIKLLYPKFWQKRNIIAYILFPISWIYQFLGFLRHVFVRPVILPAKVICVGNCSVGGTGKTQIVMYLANLLKTQNIDFVIVTKAYGSNLKEATIVKAEHSTLEVGDESVILAKHGTVIATKNIKQILPLIHELKPSIIIVDDFLQNPYFHKDITIVSVDRQRLFGNGFLIPAGPLREYPNRALSAADLVFLVGNNSGGIPVSLASYANKLIQAQIVASSDIDKNKNYFAFSGIGNPERFFLTLKNYGLNIVGYKIFPDHYNYLQEDLENLSLLAKTNNATLITTRKDYVKIGDSSDIIVCLDVKLSINNPNLLYEKIFKKD.

ATP is bound at residue 54 to 61 (SVGGTGKT).

Belongs to the LpxK family.

The enzyme catalyses a lipid A disaccharide + ATP = a lipid IVA + ADP + H(+). The protein operates within glycolipid biosynthesis; lipid IV(A) biosynthesis; lipid IV(A) from (3R)-3-hydroxytetradecanoyl-[acyl-carrier-protein] and UDP-N-acetyl-alpha-D-glucosamine: step 6/6. Transfers the gamma-phosphate of ATP to the 4'-position of a tetraacyldisaccharide 1-phosphate intermediate (termed DS-1-P) to form tetraacyldisaccharide 1,4'-bis-phosphate (lipid IVA). This Rickettsia bellii (strain OSU 85-389) protein is Tetraacyldisaccharide 4'-kinase.